The following is a 159-amino-acid chain: MVLCDKGAHELGNREIRKGFCERCLYPEYFDDEEAATTTPTIKKRPPKLTWAPKKKRRKAIHLSCGCSYYGGIDCEDGFTHRGITHVHTVPDWLLLRRHQEPNLLPPPEHNNNGDGEQNNNITNQSQPQPAESVGSPDLLAELGGTFSITSSEWRSIIR.

A Nuclear localization signal motif is present at residues Lys-43–Ala-60. A zinc finger spans residues Cys-65–His-81. The tract at residues Pro-102–Leu-139 is disordered. Over residues His-110–Asn-124 the composition is skewed to low complexity.

Belongs to the geminiviridae transcriptional activator protein family. As to quaternary structure, monomer. Suppress local silencing by interacting with and inactivating host adenosine kinase 2 (ADK2) in the cytoplasm. Interacts with and inhibits host SNF1 kinase.

The protein resides in the host cytoplasm. In terms of biological role, acts as a suppressor of RNA-mediated gene silencing, also known as post-transcriptional gene silencing (PTGS), a mechanism of plant viral defense that limits the accumulation of viral RNAs. Suppresses the host RNA silencing by inhibiting adenosine kinase 2 (ADK2), a kinase involved in a general methylation pathway. Also suppresses the host basal defense by interacting with and inhibiting SNF1 kinase, a key regulator of cell metabolism implicated in innate antiviral defense. Determines pathogenicity. In Tomato pseudo-curly top virus (TPCTV), this protein is Protein C2.